We begin with the raw amino-acid sequence, 463 residues long: Glutamate--tRNA ligase (463 aa).

Positions 8–18 (PSPTGYLHIGG) match the 'HIGH' region motif. The 'KMSKS' region signature appears at 236 to 240 (RLSKR). K239 is an ATP binding site.

It belongs to the class-I aminoacyl-tRNA synthetase family. Glutamate--tRNA ligase type 1 subfamily. In terms of assembly, monomer.

It is found in the cytoplasm. The enzyme catalyses tRNA(Glu) + L-glutamate + ATP = L-glutamyl-tRNA(Glu) + AMP + diphosphate. Its function is as follows. Catalyzes the attachment of glutamate to tRNA(Glu) in a two-step reaction: glutamate is first activated by ATP to form Glu-AMP and then transferred to the acceptor end of tRNA(Glu). The sequence is that of Glutamate--tRNA ligase from Nitrosomonas eutropha (strain DSM 101675 / C91 / Nm57).